Here is a 387-residue protein sequence, read N- to C-terminus: MSVIKMTDLDLAGKRVLIRADLNVPVKDGKVTSDARIRASLPTIEAALKQGAKVMVTSHLGRPTEGEYNEEFSLKPVVDYLKEKLSAPVSLAKDYLNGVDVNAGELVVLENVRFNKGEKKDDETLSKQYAALCDVFVMDAFGTAHRAQASTHGVAKFADIACAGPLLSAELEALGKALDKPERPMVAIVGGSKVSTKLTVLDSLSKIADQLIVGGGIANTFIAAEGHSVGRSLYEADLVDDAKKLMEKCDIPVPTDVRVATEFSETAPAVLKSANDIKDDEQVLDIGDVTAERLAEILKNAKTILWNGPVGVFEFPNFRKGTEVIAKAIADSDAFSIAGGGDTLAAIDLFDIADKISYISTGGGAFLEFVEGKKLPAVAMLEERAKQ.

Residues 21–23 (DLN), Arg36, 59–62 (HLGR), Arg113, and Arg146 contribute to the substrate site. ATP-binding positions include Lys197, Glu314, and 340–343 (GGDT).

The protein belongs to the phosphoglycerate kinase family. Monomer.

The protein resides in the cytoplasm. The enzyme catalyses (2R)-3-phosphoglycerate + ATP = (2R)-3-phospho-glyceroyl phosphate + ADP. The protein operates within carbohydrate degradation; glycolysis; pyruvate from D-glyceraldehyde 3-phosphate: step 2/5. In Proteus mirabilis (strain HI4320), this protein is Phosphoglycerate kinase.